The following is a 290-amino-acid chain: Pre-mRNA-splicing factor cwf20 (290 aa).

2 disordered regions span residues 1–61 (MSLV…KSSF) and 114–134 (PNNSVSDLTSTGSSETVKKST). The segment covering 114–128 (PNNSVSDLTSTGSSE) has biased composition (polar residues).

In terms of assembly, belongs to the 40S cdc5-associated complex (or cwf complex), a spliceosome sub-complex reminiscent of a late-stage spliceosome composed of the U2, U5 and U6 snRNAs and at least brr2, cdc5, cwf2/prp3, cwf3/syf1, cwf4/syf3, cwf5/ecm2, spp42/cwf6, cwf7/spf27, cwf8, cwf9, cwf10, cwf11, cwf12, prp45/cwf13, cwf14, cwf15, cwf16, cwf17, cwf18, cwf19, cwf20, cwf21, cwf22, cwf23, cwf24, cwf25, cwf26, cyp7/cwf27, cwf28, cwf29/ist3, lea1, msl1, prp5/cwf1, prp10, prp12/sap130, prp17, prp22, sap61, sap62, sap114, sap145, slu7, smb1, smd1, smd3, smf1, smg1 and syf2.

The protein resides in the nucleus. Its function is as follows. Involved in mRNA splicing where it associates with cdc5 and the other cwf proteins as part of the spliceosome. In Schizosaccharomyces pombe (strain 972 / ATCC 24843) (Fission yeast), this protein is Pre-mRNA-splicing factor cwf20 (cwf20).